A 1010-amino-acid chain; its full sequence is Translation initiation factor IF-2 (1010 aa).

2 disordered regions span residues 54–350 and 364–420; these read KGLA…FEDD and PSFT…RPES. A compositionally biased stretch (polar residues) spans 57 to 70; the sequence is ASSTSKNSTGQRES. Residues 112–124 show a composition bias toward pro residues; that stretch reads ISPPRPPVKPLVA. Positions 145 to 155 are enriched in polar residues; it reads HSPSVKETPTE. Positions 200–258 are enriched in basic and acidic residues; that stretch reads DRPRGEKRERGESENAPSPERRVGLAKPEKPTLNRKPDGKSPKLAEPAREVRETVELKR. The span at 378-389 shows a compositional bias: low complexity; that stretch reads TAKAAPPGTPTA. A compositionally biased stretch (basic and acidic residues) spans 406–419; the sequence is KSERQEPQEEKRPE. Positions 502 to 675 constitute a tr-type G domain; that stretch reads RRPPVVTIMG…LLVAEVEELV (174 aa). The interval 511 to 518 is G1; it reads GHVDHGKT. 511 to 518 lines the GTP pocket; it reads GHVDHGKT. The segment at 536-540 is G2; sequence GITQH. Residues 561 to 564 form a G3 region; sequence DTPG. Residues 561-565 and 615-618 contribute to the GTP site; these read DTPGH and NKVD. Residues 615–618 are G4; that stretch reads NKVD. The segment at 651 to 653 is G5; the sequence is SAL.

The protein belongs to the TRAFAC class translation factor GTPase superfamily. Classic translation factor GTPase family. IF-2 subfamily.

It localises to the cytoplasm. In terms of biological role, one of the essential components for the initiation of protein synthesis. Protects formylmethionyl-tRNA from spontaneous hydrolysis and promotes its binding to the 30S ribosomal subunits. Also involved in the hydrolysis of GTP during the formation of the 70S ribosomal complex. The sequence is that of Translation initiation factor IF-2 from Microcystis aeruginosa (strain NIES-843 / IAM M-2473).